The following is a 233-amino-acid chain: Small ribosomal subunit protein uS3 (233 aa).

Residues 39–107 (VRQFLMKKLV…PAQINISEVR (69 aa)) form the KH type-2 domain.

This sequence belongs to the universal ribosomal protein uS3 family. In terms of assembly, part of the 30S ribosomal subunit. Forms a tight complex with proteins S10 and S14.

In terms of biological role, binds the lower part of the 30S subunit head. Binds mRNA in the 70S ribosome, positioning it for translation. The chain is Small ribosomal subunit protein uS3 from Buchnera aphidicola subsp. Schizaphis graminum (strain Sg).